Here is a 263-residue protein sequence, read N- to C-terminus: Transmembrane protein 176B (263 aa).

4 helical membrane passes run 61-81 (LGVT…CLYF), 89-109 (AFGC…GTIV), 121-141 (VSCL…VLGV), and 197-217 (LFLA…VVSV). Phosphoserine occurs at positions 231, 240, and 253. The interval 239 to 263 (ESERKLLDGHPAPASPAKEKIPAIL) is disordered.

It belongs to the TMEM176 family. As to expression, ubiquitously expressed with higher expression in lung, liver, kidney and colon. Expressed in cerebellar granule cells.

It localises to the nucleus membrane. In terms of biological role, may play a role in the process of maturation of dendritic cells. Required for the development of cerebellar granule cells. The protein is Transmembrane protein 176B (Tmem176b) of Mus musculus (Mouse).